The following is a 95-amino-acid chain: Aspartyl/glutamyl-tRNA(Asn/Gln) amidotransferase subunit C (95 aa).

The protein belongs to the GatC family. As to quaternary structure, heterotrimer of A, B and C subunits.

The enzyme catalyses L-glutamyl-tRNA(Gln) + L-glutamine + ATP + H2O = L-glutaminyl-tRNA(Gln) + L-glutamate + ADP + phosphate + H(+). The catalysed reaction is L-aspartyl-tRNA(Asn) + L-glutamine + ATP + H2O = L-asparaginyl-tRNA(Asn) + L-glutamate + ADP + phosphate + 2 H(+). Allows the formation of correctly charged Asn-tRNA(Asn) or Gln-tRNA(Gln) through the transamidation of misacylated Asp-tRNA(Asn) or Glu-tRNA(Gln) in organisms which lack either or both of asparaginyl-tRNA or glutaminyl-tRNA synthetases. The reaction takes place in the presence of glutamine and ATP through an activated phospho-Asp-tRNA(Asn) or phospho-Glu-tRNA(Gln). The polypeptide is Aspartyl/glutamyl-tRNA(Asn/Gln) amidotransferase subunit C (Marinobacter nauticus (strain ATCC 700491 / DSM 11845 / VT8) (Marinobacter aquaeolei)).